A 200-amino-acid chain; its full sequence is MRIILLGPPGAGKGTQSERIVERYRVPQLSTGDMLRAAVAAETPVGLEAKAIMESGGLVSDAIVVGIVADRIEEADAKNGFILDGFPRTVEQAKALDAMLAQKGIALDAVVEFVVDETALVGRIAKRAEETAARGQPVRKDDTPEVFKTRLDAYRKQTAPLSDYYAGTGLLRKIDGMKPIDVVTGDVTALLDGFRETASS.

Residue 10 to 15 participates in ATP binding; that stretch reads GAGKGT. Residues 30 to 59 form an NMP region; it reads STGDMLRAAVAAETPVGLEAKAIMESGGLV. Residues Thr-31, Arg-36, 57–59, 85–88, and Gln-92 each bind AMP; these read GLV and GFPR. An LID region spans residues 126–142; the sequence is KRAEETAARGQPVRKDD. Arg-127 contributes to the ATP binding site. AMP contacts are provided by Arg-139 and Arg-150. ATP is bound at residue Lys-178.

This sequence belongs to the adenylate kinase family. As to quaternary structure, monomer.

The protein resides in the cytoplasm. It catalyses the reaction AMP + ATP = 2 ADP. The protein operates within purine metabolism; AMP biosynthesis via salvage pathway; AMP from ADP: step 1/1. Its function is as follows. Catalyzes the reversible transfer of the terminal phosphate group between ATP and AMP. Plays an important role in cellular energy homeostasis and in adenine nucleotide metabolism. The chain is Adenylate kinase from Methylorubrum extorquens (strain PA1) (Methylobacterium extorquens).